The chain runs to 764 residues: 5-methyltetrahydropteroyltriglutamate--homocysteine methyltransferase (764 aa).

5-methyltetrahydropteroyltri-L-glutamate contacts are provided by residues 16–19 (RELK) and Lys-121. L-homocysteine contacts are provided by residues 440-442 (IGS) and Glu-493. L-methionine is bound by residues 440-442 (IGS) and Glu-493. Residues 524–525 (RC) and Trp-570 contribute to the 5-methyltetrahydropteroyltri-L-glutamate site. L-homocysteine is bound at residue Asp-608. An L-methionine-binding site is contributed by Asp-608. Glu-614 is a binding site for 5-methyltetrahydropteroyltri-L-glutamate. His-650, Cys-652, and Glu-674 together coordinate Zn(2+). Residue His-703 is the Proton donor of the active site. Cys-735 is a binding site for Zn(2+).

The protein belongs to the vitamin-B12 independent methionine synthase family. Zn(2+) is required as a cofactor.

The enzyme catalyses 5-methyltetrahydropteroyltri-L-glutamate + L-homocysteine = tetrahydropteroyltri-L-glutamate + L-methionine. Its pathway is amino-acid biosynthesis; L-methionine biosynthesis via de novo pathway; L-methionine from L-homocysteine (MetE route): step 1/1. Catalyzes the transfer of a methyl group from 5-methyltetrahydrofolate to homocysteine resulting in methionine formation. In Burkholderia cenocepacia (strain HI2424), this protein is 5-methyltetrahydropteroyltriglutamate--homocysteine methyltransferase.